Reading from the N-terminus, the 122-residue chain is Large ribosomal subunit protein uL14 (122 aa).

The protein belongs to the universal ribosomal protein uL14 family. In terms of assembly, part of the 50S ribosomal subunit. Forms a cluster with proteins L3 and L19. In the 70S ribosome, L14 and L19 interact and together make contacts with the 16S rRNA in bridges B5 and B8.

Its function is as follows. Binds to 23S rRNA. Forms part of two intersubunit bridges in the 70S ribosome. This is Large ribosomal subunit protein uL14 from Alteromonas mediterranea (strain DSM 17117 / CIP 110805 / LMG 28347 / Deep ecotype).